A 695-amino-acid polypeptide reads, in one-letter code: Solute carrier family 53 member 1 (695 aa).

The Cytoplasmic portion of the chain corresponds to 1-228 (MKFAEHLSAH…RVPPLGAAQP (228 aa)). The SPX domain occupies 2 to 224 (KFAEHLSAHI…MKRLRVPPLG (223 aa)). The tract at residues 158 to 165 (KILKKHDK) is important for inositol polyphosphate binding. Residues 229 to 259 (APAWTTFRVGLFCGIFIVLNITLVFAAVFKL) traverse the membrane as a helical segment. Topologically, residues 260-264 (ETDRT) are extracellular. Residues 265–296 (VWPLIRIYRGGFLLIEFLFLLGINTYGWRQAG) form a helical membrane-spanning segment. Residues 297 to 309 (VNHVLIFELNPRN) are Cytoplasmic-facing. Residues 310–337 (NLSHQHLFEIAGFLGILWCLSLLACFFA) traverse the membrane as a helical segment. Residues 338–343 (PISIIP) are Extracellular-facing. The helical transmembrane segment at 344–365 (IYVYPLALYGFMVFFLINPTKT) threads the bilayer. Residues 366-383 (FYYKSRFWLLKLLFRVFT) constitute an intramembrane region (helical). At 384 to 388 (APFHK) the chain is on the cytoplasmic side. A discontinuously helical transmembrane segment spans residues 389–422 (VGFADFWLADQLNSLSVILMDLEYMICFYSFELK). Residues Asp-398 and Asn-401 each coordinate phosphate. Residues 423-429 (WDESKGL) are Extracellular-facing. A discontinuously helical membrane pass occupies residues 430-471 (LPNDPQEPEFCHKYSYGVRAIVQCIPAWLRFIQCLRRYRDTR). One can recognise an EXS domain in the interval 439–642 (FCHKYSYGVR…LNADDQTLLE (204 aa)). Residue Arg-472 is a topological domain, cytoplasmic. A helical membrane pass occupies residues 473 to 503 (AFPHLVNAGKYSTTFFTVTFAALYSTHEEQN). 2 residues coordinate phosphate: Lys-482 and Tyr-483. The Extracellular portion of the chain corresponds to 504–506 (HSD). A helical membrane pass occupies residues 507 to 534 (TVVFFYLWVFFCIISSCYTLIWDLKMDW). The Cytoplasmic portion of the chain corresponds to 535–553 (GLFDKNAGENTFLREEIVY). Residues 554 to 584 (PQKAYYYCAIIEDVILRFAWTIQISITATFK) traverse the membrane as a discontinuously helical segment. Arg-570 is a phosphate binding site. Residues 585–586 (PH) lie on the Extracellular side of the membrane. The chain crosses the membrane as a helical span at residues 587 to 625 (VGNIIATVFAPLEVFRRFVWNFFRLENEHLNNCGEFRAV). Phosphate is bound by residues Arg-602 and Arg-603. Topologically, residues 626-695 (RDISVAPLNA…IEDTDDEANT (70 aa)) are cytoplasmic. Ser-667 carries the phosphoserine modification. Residues 671–695 (PRLASQSKARDTKVLIEDTDDEANT) are disordered. Thr-689 carries the post-translational modification Phosphothreonine.

It belongs to the SYG1 (TC 2.A.94) family. In terms of assembly, homodimer. In terms of tissue distribution, expressed in pancreatic islets.

It is found in the cell membrane. The catalysed reaction is phosphate(in) = phosphate(out). In terms of biological role, inorganic ion transporter that mediates phosphate ion export across plasma membrane. Plays a major role in phosphate homeostasis, preventing intracellular phosphate accumulation and possible calcium phosphate precipitation, ultimately preserving calcium signaling. Binds inositol hexakisphosphate (Ins6P) and similar inositol polyphosphates, such as 5-diphospho-inositol pentakisphosphate (5-InsP7), which are important intracellular signaling molecules involved in regulation of phosphate flux. Functionally, (Microbial infection) Receptor for xenotropic and polytropic murine leukemia (X- and P-MLV) retroviruses. Confers susceptibility to X- or P-MLV infection in vitro. This Mus musculus (Mouse) protein is Solute carrier family 53 member 1.